The following is a 151-amino-acid chain: Transcriptional regulator MraZ (151 aa).

2 SpoVT-AbrB domains span residues 5–52 (ANAV…PLDE) and 81–124 (AVDL…DEDA).

This sequence belongs to the MraZ family. As to quaternary structure, forms oligomers.

Its subcellular location is the cytoplasm. The protein localises to the nucleoid. In Pseudomonas putida (strain ATCC 700007 / DSM 6899 / JCM 31910 / BCRC 17059 / LMG 24140 / F1), this protein is Transcriptional regulator MraZ.